A 247-amino-acid polypeptide reads, in one-letter code: DNA polymerase sliding clamp 1 (247 aa).

This sequence belongs to the PCNA family. As to quaternary structure, heterotrimer. The subunits circularize to form a toroid; DNA passes through its center. Replication factor C (RFC) is required to load the toroid on the DNA.

Sliding clamp subunit that acts as a moving platform for DNA processing. Responsible for tethering the catalytic subunit of DNA polymerase and other proteins to DNA during high-speed replication. The sequence is that of DNA polymerase sliding clamp 1 from Aeropyrum pernix (strain ATCC 700893 / DSM 11879 / JCM 9820 / NBRC 100138 / K1).